Reading from the N-terminus, the 587-residue chain is Zinc finger protein 69 (587 aa).

A disordered region spans residues 42–128 (NGTQQESLAD…TPGTTAAGSQ (87 aa)). Residues 76–147 (HDEATPGTPA…VDLSQEEWGQ (72 aa)) form the KRAB domain. C2H2-type zinc fingers lie at residues 271–293 (HKKK…ILEQ), 299–321 (KPAR…CMRA), 327–349 (NVCE…HTGE), 355–377 (KECG…HTGE), 383–405 (EECG…HTGE), 411–433 (DKCQ…HSGE), 439–461 (SECG…HTGE), 467–489 (TSCC…HTGE), and 495–517 (KECG…HTGV). The interval 564–587 (SRHQKIHRRNTFRDDPGHENKRQL) is disordered. Residues 574–587 (TFRDDPGHENKRQL) show a composition bias toward basic and acidic residues.

Belongs to the krueppel C2H2-type zinc-finger protein family.

It is found in the nucleus. Functionally, putative transcription factor that appears to regulate lipid metabolism. In Mus musculus (Mouse), this protein is Zinc finger protein 69.